The chain runs to 87 residues: Signal recognition particle 19 kDa protein (87 aa).

Belongs to the SRP19 family. As to quaternary structure, part of the signal recognition particle protein translocation system, which is composed of SRP and FtsY. Archaeal SRP consists of a 7S RNA molecule of 300 nucleotides and two protein subunits: SRP54 and SRP19.

Its subcellular location is the cytoplasm. Functionally, involved in targeting and insertion of nascent membrane proteins into the cytoplasmic membrane. Binds directly to 7S RNA and mediates binding of the 54 kDa subunit of the SRP. In Methanocaldococcus jannaschii (strain ATCC 43067 / DSM 2661 / JAL-1 / JCM 10045 / NBRC 100440) (Methanococcus jannaschii), this protein is Signal recognition particle 19 kDa protein.